Here is a 321-residue protein sequence, read N- to C-terminus: Glucokinase (321 aa).

Position 8–13 (8–13 (GDVGGT)) interacts with ATP.

It belongs to the bacterial glucokinase family.

It localises to the cytoplasm. The enzyme catalyses D-glucose + ATP = D-glucose 6-phosphate + ADP + H(+). The polypeptide is Glucokinase (Salmonella agona (strain SL483)).